An 830-amino-acid chain; its full sequence is Phenylalanine--tRNA ligase beta subunit (830 aa).

The tRNA-binding domain occupies 39-158 (GQSLDGVVVG…DDTPVGTPFP (120 aa)). The B5 domain maps to 417-492 (PAEKTIALRP…RLHGYDQIPE (76 aa)). Mg(2+) is bound by residues Asp-470, Asp-476, Glu-479, and Glu-480. Positions 490 to 510 (IPEPERVPVPSRTPEQPPEET) are disordered. In terms of domain architecture, FDX-ACB spans 736-828 (SRFPVVDRDL…LAENHGARLR (93 aa)).

This sequence belongs to the phenylalanyl-tRNA synthetase beta subunit family. Type 1 subfamily. In terms of assembly, tetramer of two alpha and two beta subunits. The cofactor is Mg(2+).

The protein localises to the cytoplasm. It catalyses the reaction tRNA(Phe) + L-phenylalanine + ATP = L-phenylalanyl-tRNA(Phe) + AMP + diphosphate + H(+). The sequence is that of Phenylalanine--tRNA ligase beta subunit from Salinibacter ruber (strain DSM 13855 / M31).